A 344-amino-acid chain; its full sequence is L-threonine 3-dehydrogenase (344 aa).

Cys-42 contributes to the Zn(2+) binding site. Active-site charge relay system residues include Thr-44 and His-47. 6 residues coordinate Zn(2+): His-67, Glu-68, Cys-97, Cys-100, Cys-103, and Cys-111. NAD(+) contacts are provided by residues Ile-179, Asp-199, Arg-204, 266-268 (LGI), and 290-291 (IY).

This sequence belongs to the zinc-containing alcohol dehydrogenase family. Homotetramer. It depends on Zn(2+) as a cofactor.

It localises to the cytoplasm. It catalyses the reaction L-threonine + NAD(+) = (2S)-2-amino-3-oxobutanoate + NADH + H(+). Its pathway is amino-acid degradation; L-threonine degradation via oxydo-reductase pathway; glycine from L-threonine: step 1/2. Functionally, catalyzes the NAD(+)-dependent oxidation of L-threonine to 2-amino-3-ketobutyrate. The sequence is that of L-threonine 3-dehydrogenase from Sinorhizobium medicae (strain WSM419) (Ensifer medicae).